The sequence spans 442 residues: Putative neutral sphingomyelinase (442 aa).

E46 provides a ligand contact to Mg(2+). The active-site Proton acceptor is H264. The disordered stretch occupies residues 309-330 (ALTGEDDQSSQHQPEIQCNGSS). The span at 318–330 (SQHQPEIQCNGSS) shows a compositional bias: polar residues. 2 helical membrane passes run 362–384 (RILY…EFTA) and 391–413 (IFLL…ASIW).

Belongs to the neutral sphingomyelinase family.

The protein resides in the membrane. It carries out the reaction a sphingomyelin + H2O = phosphocholine + an N-acylsphing-4-enine + H(+). It participates in lipid metabolism; sphingolipid metabolism. In Drosophila melanogaster (Fruit fly), this protein is Putative neutral sphingomyelinase.